The chain runs to 64 residues: Alpha-conotoxin-like Lt1.3 (64 aa).

The first 21 residues, 1-21 (MGMRMMFTMFLLVVLTTTVVS), serve as a signal peptide directing secretion. A propeptide spanning residues 22–45 (FNLDRESNHENRRTSNQITRGMWD) is cleaved from the precursor. 2 cysteine pairs are disulfide-bonded: Cys-47/Cys-53 and Cys-48/Cys-61. A lacks the Ser-Xaa-Pro motif that is crucial for potent interaction with nAChR region spans residues 49–51 (DDP).

This sequence belongs to the conotoxin A superfamily. As to expression, expressed by the venom duct.

The protein localises to the secreted. In terms of biological role, alpha-conotoxins act on postsynaptic membranes, they bind to the nicotinic acetylcholine receptors (nAChR) and thus inhibit them. Has possibly a distinct nAChR binding mode from other alpha-conotoxins, due to a different three residue motif (lacks the Ser-Xaa-Pro motif). The sequence is that of Alpha-conotoxin-like Lt1.3 from Conus litteratus (Lettered cone).